Reading from the N-terminus, the 275-residue chain is Phosphonates import ATP-binding protein PhnC (275 aa).

The ABC transporter domain maps to 2–246 (LKIENLTKRY…ALTEIYGEEE (245 aa)). 35 to 42 (GPSGAGKS) lines the ATP pocket.

This sequence belongs to the ABC transporter superfamily. Phosphonates importer (TC 3.A.1.9.1) family. As to quaternary structure, the complex is composed of two ATP-binding proteins (PhnC), two transmembrane proteins (PhnE) and a solute-binding protein (PhnD).

It localises to the cell inner membrane. It catalyses the reaction phosphonate(out) + ATP + H2O = phosphonate(in) + ADP + phosphate + H(+). Functionally, part of the ABC transporter complex PhnCDE involved in phosphonates import. Responsible for energy coupling to the transport system. This chain is Phosphonates import ATP-binding protein PhnC, found in Wolinella succinogenes (strain ATCC 29543 / DSM 1740 / CCUG 13145 / JCM 31913 / LMG 7466 / NCTC 11488 / FDC 602W) (Vibrio succinogenes).